We begin with the raw amino-acid sequence, 151 residues long: ATP synthase subunit b' (151 aa).

The helical transmembrane segment at Thr-18–Phe-38 threads the bilayer.

Belongs to the ATPase B chain family. F-type ATPases have 2 components, F(1) - the catalytic core - and F(0) - the membrane proton channel. F(1) has five subunits: alpha(3), beta(3), gamma(1), delta(1), epsilon(1). F(0) has four main subunits: a(1), b(1), b'(1) and c(10-14). The alpha and beta chains form an alternating ring which encloses part of the gamma chain. F(1) is attached to F(0) by a central stalk formed by the gamma and epsilon chains, while a peripheral stalk is formed by the delta, b and b' chains.

The protein resides in the cellular thylakoid membrane. F(1)F(0) ATP synthase produces ATP from ADP in the presence of a proton or sodium gradient. F-type ATPases consist of two structural domains, F(1) containing the extramembraneous catalytic core and F(0) containing the membrane proton channel, linked together by a central stalk and a peripheral stalk. During catalysis, ATP synthesis in the catalytic domain of F(1) is coupled via a rotary mechanism of the central stalk subunits to proton translocation. Functionally, component of the F(0) channel, it forms part of the peripheral stalk, linking F(1) to F(0). The b'-subunit is a diverged and duplicated form of b found in plants and photosynthetic bacteria. The chain is ATP synthase subunit b' from Prochlorococcus marinus (strain MIT 9313).